Consider the following 177-residue polypeptide: GTP-dependent dephospho-CoA kinase (177 aa).

Residues D48, V49, V50, D67, K69, E124, and D147 each contribute to the GTP site.

Belongs to the GTP-dependent DPCK family.

It catalyses the reaction 3'-dephospho-CoA + GTP = GDP + CoA + H(+). It functions in the pathway cofactor biosynthesis; coenzyme A biosynthesis. In terms of biological role, catalyzes the GTP-dependent phosphorylation of the 3'-hydroxyl group of dephosphocoenzyme A to form coenzyme A (CoA). This Thermococcus onnurineus (strain NA1) protein is GTP-dependent dephospho-CoA kinase.